Here is a 70-residue protein sequence, read N- to C-terminus: DNA-directed RNA polymerase subunit epsilon (70 aa).

It belongs to the RNA polymerase subunit epsilon family. In terms of assembly, RNAP is composed of a core of 2 alpha, a beta and a beta' subunit. The core is associated with a delta subunit, and at least one of epsilon or omega. When a sigma factor is associated with the core the holoenzyme is formed, which can initiate transcription.

The catalysed reaction is RNA(n) + a ribonucleoside 5'-triphosphate = RNA(n+1) + diphosphate. In terms of biological role, a non-essential component of RNA polymerase (RNAP). The protein is DNA-directed RNA polymerase subunit epsilon of Bacillus cereus (strain ATCC 14579 / DSM 31 / CCUG 7414 / JCM 2152 / NBRC 15305 / NCIMB 9373 / NCTC 2599 / NRRL B-3711).